Consider the following 160-residue polypeptide: Transcription elongation factor GreA (160 aa).

Positions 14-38 (IKAELASLKKERPEVIKAIAEAREE) form a coiled coil.

It belongs to the GreA/GreB family.

Functionally, necessary for efficient RNA polymerase transcription elongation past template-encoded arresting sites. The arresting sites in DNA have the property of trapping a certain fraction of elongating RNA polymerases that pass through, resulting in locked ternary complexes. Cleavage of the nascent transcript by cleavage factors such as GreA or GreB allows the resumption of elongation from the new 3'terminus. GreA releases sequences of 2 to 3 nucleotides. This is Transcription elongation factor GreA from Maridesulfovibrio salexigens (strain ATCC 14822 / DSM 2638 / NCIMB 8403 / VKM B-1763) (Desulfovibrio salexigens).